The primary structure comprises 301 residues: MTEGVLINENEVESKLEAVIKPGSFTGENAGEMAEVILIPKKAIDIKLEADVITPDSFAGKSAEEIGKLSVWQGPKTYPLSEFFEVTGNGGSSAAETLIRIKGDAMRIKRIGESMSAGKIEIEGSAGMHVGTGMKGGELVVYGDADSWAGMEMTGGLLHIKGNAGDHVGCAYRGKWHGMKGGRIVIEGSARHQLGGGMDGGEILVEGDVKSFCGIRQNGGLIFVKGSALRGVGAEMAGGTIVIGGKIERFSPGFEFVSMENSITSGEVELIGEFKKFTGDYAISKRAKGALYVVADTNPEL.

Tandem repeats lie at residues 112–124 (GESM…EIEG), 131–143 (GTGM…VVYG), 150–162 (GMEM…HIKG), 176–188 (WHGM…VIEG), 195–207 (GGGM…LVEG), 214–226 (GIRQ…FVKG), and 233–245 (GAEM…VIGG). The tract at residues 112-245 (GESMSAGKIE…MAGGTIVIGG (134 aa)) is 7 X 13 AA repeats of [GW]-X-X-[MQ]-X-X-G-X-[IL]-X-[IV]-X-G.

It belongs to the FwdC/FmdC family. This enzyme is composed of six subunits; FmdA (65 kDa), FmdB (50 kDa), FmdC (34 kDa), FmdD (17 kDa), FmdE (23 kDa) and FmdF (37 kDa).

It catalyses the reaction N-formylmethanofuran + 2 oxidized [2Fe-2S]-[ferredoxin] + H2O = methanofuran + 2 reduced [2Fe-2S]-[ferredoxin] + CO2 + H(+). It functions in the pathway one-carbon metabolism; methanogenesis from CO(2); 5,10-methenyl-5,6,7,8-tetrahydromethanopterin from CO(2): step 1/3. Its activity is regulated as follows. Inactivated by cyanide. In terms of biological role, catalyzes the reversible oxidation of CO(2) and methanofuran (MFR) to N-formylmethanofuran (CHO-MFR). Can use N-furfurylformamide, formamide, N-methylformamide, and formate as substrates. This enzyme is oxygen-labile. The sequence is that of Molybdenum-containing formylmethanofuran dehydrogenase 1 subunit C (fmdC) from Methanosarcina barkeri (strain Fusaro / DSM 804).